The primary structure comprises 196 residues: MFCEKAMELIRELHRAPEGQLPAFNEDGLRQVLEEMKALYEQNQSDVNEAKSGGRSDLIPTIKFRHCSLLRNRRCTVAYLYDRLLRIRALRWEYGSVLPNALRFHMAAEEMEWFNNYKRSLATYMRSLGGDEGLDITQDMKPPKSLYIEVRCLKDYGEFEVDDGTSVLLKKNSQHFLPRWKCEQLIRQGVLEHILS.

It belongs to the GINS1/PSF1 family. Component of the GINS complex which is a heterotetramer of GINS1, GINS2, GINS3 and GINS4. Forms a stable subcomplex with GINS4. GINS complex interacts with DNA primase in vitro. Component of the CMG helicase complex, a hexameric ring of related MCM2-7 subunits stabilized by CDC45 and the tetrameric GINS complex.

Its subcellular location is the nucleus. It is found in the chromosome. Required for correct functioning of the GINS complex, a complex that plays an essential role in the initiation of DNA replication, and progression of DNA replication forks. GINS complex is a core component of CDC45-MCM-GINS (CMG) helicase, the molecular machine that unwinds template DNA during replication, and around which the replisome is built. The polypeptide is DNA replication complex GINS protein PSF1 (Homo sapiens (Human)).